The sequence spans 377 residues: Odorant receptor 30a (377 aa).

Topologically, residues 1 to 34 are cytoplasmic; that stretch reads MELKSMDPVEMPIFGSTLKLMKFWSYLFVHNWRR. The chain crosses the membrane as a helical span at residues 35 to 55; sequence YVAMTPYIIINCTQYVDIYLS. Residues 56–65 lie on the Extracellular side of the membrane; sequence TESLDFIIRN. Residues 66–86 traverse the membrane as a helical segment; sequence VYLAVLFTNTVVRGVLLCVQR. The Cytoplasmic portion of the chain corresponds to 87 to 127; that stretch reads FSYERFINILKSFYIELLQSDDPIINILVKETTRLSVLISR. Residues 128–148 form a helical membrane-spanning segment; the sequence is INLLMGCCTCIGFVTYPIFGS. The Extracellular segment spans residues 149–172; sequence ERVLPYGMYLPTIDEYKYASPYYE. The chain crosses the membrane as a helical span at residues 173 to 193; it reads IFFVIQAIMAPMGCCMYIPYT. The Cytoplasmic segment spans residues 194–254; the sequence is NMVVTFTLFA…SMNALNTHLH (61 aa). A helical transmembrane segment spans residues 255-275; that stretch reads LVEFLCFGAMLCVLLFSLIIA. Residues 276–280 are Extracellular-facing; that stretch reads QTIAQ. The chain crosses the membrane as a helical span at residues 281–301; the sequence is TVIVIAYMVMIFANSVVLYYV. The Cytoplasmic portion of the chain corresponds to 302-344; sequence ANELYFQSFDIAIAAYESNWMDFDVDTQKTLKFLIMRSQKPLA. Residues 345 to 365 traverse the membrane as a helical segment; the sequence is ILVGGTYPMNLKMLQSLLNAI. Over 366–377 the chain is Extracellular; sequence YSFFTLLRRVYG.

This sequence belongs to the insect chemoreceptor superfamily. Heteromeric odorant receptor channel (TC 1.A.69) family. Or30a subfamily. In terms of assembly, interacts with Orco. Complexes exist early in the endomembrane system in olfactory sensory neurons (OSNs), coupling these complexes to the conserved ciliary trafficking pathway.

Its subcellular location is the cell membrane. Odorant receptor which mediates acceptance or avoidance behavior, depending on its substrates. The odorant receptor repertoire encodes a large collection of odor stimuli that vary widely in identity, intensity, and duration. May form a complex with Orco to form odorant-sensing units, providing sensitive and prolonged odorant signaling and calcium permeability. Involved in the behavioral responses to propyl acetate and anisole. This chain is Odorant receptor 30a (Or30a), found in Drosophila melanogaster (Fruit fly).